Here is a 259-residue protein sequence, read N- to C-terminus: Type III pantothenate kinase (259 aa).

6–13 (DVGNTNIV) lines the ATP pocket. Substrate is bound by residues Tyr-100 and 107–110 (GADR). Residue Asp-109 is the Proton acceptor of the active site. Asp-129 is a K(+) binding site. Thr-132 contributes to the ATP binding site. A substrate-binding site is contributed by Thr-184.

Belongs to the type III pantothenate kinase family. Homodimer. The cofactor is NH4(+). K(+) is required as a cofactor.

It is found in the cytoplasm. The catalysed reaction is (R)-pantothenate + ATP = (R)-4'-phosphopantothenate + ADP + H(+). It participates in cofactor biosynthesis; coenzyme A biosynthesis; CoA from (R)-pantothenate: step 1/5. Catalyzes the phosphorylation of pantothenate (Pan), the first step in CoA biosynthesis. This is Type III pantothenate kinase from Clostridium perfringens (strain 13 / Type A).